Consider the following 254-residue polypeptide: 3-deoxy-manno-octulosonate cytidylyltransferase (254 aa).

This sequence belongs to the KdsB family.

The protein resides in the cytoplasm. It catalyses the reaction 3-deoxy-alpha-D-manno-oct-2-ulosonate + CTP = CMP-3-deoxy-beta-D-manno-octulosonate + diphosphate. It functions in the pathway nucleotide-sugar biosynthesis; CMP-3-deoxy-D-manno-octulosonate biosynthesis; CMP-3-deoxy-D-manno-octulosonate from 3-deoxy-D-manno-octulosonate and CTP: step 1/1. The protein operates within bacterial outer membrane biogenesis; lipopolysaccharide biosynthesis. In terms of biological role, activates KDO (a required 8-carbon sugar) for incorporation into bacterial lipopolysaccharide in Gram-negative bacteria. This Pseudomonas syringae pv. syringae (strain B728a) protein is 3-deoxy-manno-octulosonate cytidylyltransferase.